The sequence spans 109 residues: Large ribosomal subunit protein uL22 (109 aa).

The protein belongs to the universal ribosomal protein uL22 family. In terms of assembly, part of the 50S ribosomal subunit.

Its function is as follows. This protein binds specifically to 23S rRNA; its binding is stimulated by other ribosomal proteins, e.g. L4, L17, and L20. It is important during the early stages of 50S assembly. It makes multiple contacts with different domains of the 23S rRNA in the assembled 50S subunit and ribosome. Functionally, the globular domain of the protein is located near the polypeptide exit tunnel on the outside of the subunit, while an extended beta-hairpin is found that lines the wall of the exit tunnel in the center of the 70S ribosome. The protein is Large ribosomal subunit protein uL22 of Polaromonas naphthalenivorans (strain CJ2).